The sequence spans 845 residues: Lon protease (845 aa).

The region spanning 45–242 (MPILALRNMI…RLLYLLHKEL (198 aa)) is the Lon N-terminal domain. Residue 393-400 (GPPGVGKT) participates in ATP binding. Residues 629-811 (NGDAGVVIGL…NEVLKEALLE (183 aa)) enclose the Lon proteolytic domain. Catalysis depends on residues S717 and K760.

The protein belongs to the peptidase S16 family. As to quaternary structure, homohexamer. Organized in a ring with a central cavity.

It is found in the cytoplasm. It catalyses the reaction Hydrolysis of proteins in presence of ATP.. Functionally, ATP-dependent serine protease that mediates the selective degradation of mutant and abnormal proteins as well as certain short-lived regulatory proteins. Required for cellular homeostasis and for survival from DNA damage and developmental changes induced by stress. Degrades polypeptides processively to yield small peptide fragments that are 5 to 10 amino acids long. Binds to DNA in a double-stranded, site-specific manner. This is Lon protease from Porphyromonas gingivalis (strain ATCC 33277 / DSM 20709 / CIP 103683 / JCM 12257 / NCTC 11834 / 2561).